Here is a 114-residue protein sequence, read N- to C-terminus: MICOS complex subunit MIC12 (114 aa).

The chain crosses the membrane as a helical span at residues 4–26; the sequence is IAKLGSFTLVSGVVATSCYYYFI.

It belongs to the MICOS complex subunit Mic12 family. As to quaternary structure, component of the mitochondrial contact site and cristae organizing system (MICOS) complex.

The protein localises to the mitochondrion inner membrane. In terms of biological role, component of the MICOS complex, a large protein complex of the mitochondrial inner membrane that plays crucial roles in the maintenance of crista junctions, inner membrane architecture, and formation of contact sites to the outer membrane. The polypeptide is MICOS complex subunit MIC12 (AIM5) (Candida glabrata (strain ATCC 2001 / BCRC 20586 / JCM 3761 / NBRC 0622 / NRRL Y-65 / CBS 138) (Yeast)).